A 361-amino-acid chain; its full sequence is Biotin synthase (361 aa).

Residues 14–38 (AQRTPEPLPPTSQGLARPSHDVVRG) form a disordered region. The Radical SAM core domain maps to 86–315 (HKGGPAALCG…ARDILVCGGR (230 aa)). [4Fe-4S] cluster-binding residues include Cys-104, Cys-108, and Cys-111. [2Fe-2S] cluster-binding residues include Cys-180 and Cys-240.

Belongs to the radical SAM superfamily. Biotin synthase family. Homodimer. The cofactor is [4Fe-4S] cluster. [2Fe-2S] cluster is required as a cofactor.

It carries out the reaction (4R,5S)-dethiobiotin + (sulfur carrier)-SH + 2 reduced [2Fe-2S]-[ferredoxin] + 2 S-adenosyl-L-methionine = (sulfur carrier)-H + biotin + 2 5'-deoxyadenosine + 2 L-methionine + 2 oxidized [2Fe-2S]-[ferredoxin]. It functions in the pathway cofactor biosynthesis; biotin biosynthesis; biotin from 7,8-diaminononanoate: step 2/2. In terms of biological role, catalyzes the conversion of dethiobiotin (DTB) to biotin by the insertion of a sulfur atom into dethiobiotin via a radical-based mechanism. This is Biotin synthase from Nitratidesulfovibrio vulgaris (strain DP4) (Desulfovibrio vulgaris).